We begin with the raw amino-acid sequence, 648 residues long: Protein teflon (648 aa).

The segment at 33–56 (LYCHFCRDLFTQLPEFLRHLQGAH) adopts a C2H2-type 1 zinc-finger fold. 2 disordered regions span residues 76-127 (SGEQ…GSQN) and 146-170 (EHIN…NSES). The span at 85-94 (VGHNSSSSDS) shows a compositional bias: polar residues. Basic and acidic residues predominate over residues 96–107 (GLAKSEDSRATE). A C2H2-type 2; degenerate zinc finger spans residues 598 to 620 (YFCKCCDDIFTLNEDYIRHLVSQ). The C2H2-type 3 zinc-finger motif lies at 624–647 (YQCTKCIKTFKYQGHYDKHMRTVH).

The protein belongs to the Teflon family.

Its subcellular location is the nucleus. It localises to the chromosome. Functionally, specifically required in males for proper segregation of autosomal bivalents at meiosis I. Expression is required in the male germ line prior to spermatocyte stage S4. May have a role as a bridging molecule maintaining adhesion to hold autosome bivalents together via heterochromatic connections. In Drosophila yakuba (Fruit fly), this protein is Protein teflon.